A 737-amino-acid chain; its full sequence is Probable beta-glucosidase L (737 aa).

The signal sequence occupies residues Met-1–Ala-19. N-linked (GlcNAc...) asparagine glycosylation occurs at Asn-225. Asp-253 is an active-site residue. Asn-340, Asn-365, and Asn-608 each carry an N-linked (GlcNAc...) asparagine glycan.

This sequence belongs to the glycosyl hydrolase 3 family.

Its subcellular location is the secreted. The enzyme catalyses Hydrolysis of terminal, non-reducing beta-D-glucosyl residues with release of beta-D-glucose.. It functions in the pathway glycan metabolism; cellulose degradation. In terms of biological role, beta-glucosidases are one of a number of cellulolytic enzymes involved in the degradation of cellulosic biomass. Catalyzes the last step releasing glucose from the inhibitory cellobiose. The sequence is that of Probable beta-glucosidase L (bglL) from Emericella nidulans (strain FGSC A4 / ATCC 38163 / CBS 112.46 / NRRL 194 / M139) (Aspergillus nidulans).